A 103-amino-acid polypeptide reads, in one-letter code: Pyrimidine/purine nucleoside phosphorylase (103 aa).

Belongs to the nucleoside phosphorylase PpnP family.

It carries out the reaction a purine D-ribonucleoside + phosphate = a purine nucleobase + alpha-D-ribose 1-phosphate. The catalysed reaction is adenosine + phosphate = alpha-D-ribose 1-phosphate + adenine. The enzyme catalyses cytidine + phosphate = cytosine + alpha-D-ribose 1-phosphate. It catalyses the reaction guanosine + phosphate = alpha-D-ribose 1-phosphate + guanine. It carries out the reaction inosine + phosphate = alpha-D-ribose 1-phosphate + hypoxanthine. The catalysed reaction is thymidine + phosphate = 2-deoxy-alpha-D-ribose 1-phosphate + thymine. The enzyme catalyses uridine + phosphate = alpha-D-ribose 1-phosphate + uracil. It catalyses the reaction xanthosine + phosphate = alpha-D-ribose 1-phosphate + xanthine. Functionally, catalyzes the phosphorolysis of diverse nucleosides, yielding D-ribose 1-phosphate and the respective free bases. Can use uridine, adenosine, guanosine, cytidine, thymidine, inosine and xanthosine as substrates. Also catalyzes the reverse reactions. The chain is Pyrimidine/purine nucleoside phosphorylase from Dechloromonas aromatica (strain RCB).